The sequence spans 353 residues: Probable dual-specificity RNA methyltransferase RlmN (353 aa).

Glu-104 functions as the Proton acceptor in the catalytic mechanism. A Radical SAM core domain is found at 112–341; that stretch reads DGGRKTICIS…ILNRRSPGKD (230 aa). Cys-119 and Cys-346 are joined by a disulfide. 3 residues coordinate [4Fe-4S] cluster: Cys-126, Cys-130, and Cys-133. S-adenosyl-L-methionine-binding positions include 173–174, Ser-205, 228–230, and Asn-304; these read GE and SLN. Cys-346 acts as the S-methylcysteine intermediate in catalysis.

The protein belongs to the radical SAM superfamily. RlmN family. It depends on [4Fe-4S] cluster as a cofactor.

It is found in the cytoplasm. The enzyme catalyses adenosine(2503) in 23S rRNA + 2 reduced [2Fe-2S]-[ferredoxin] + 2 S-adenosyl-L-methionine = 2-methyladenosine(2503) in 23S rRNA + 5'-deoxyadenosine + L-methionine + 2 oxidized [2Fe-2S]-[ferredoxin] + S-adenosyl-L-homocysteine. It catalyses the reaction adenosine(37) in tRNA + 2 reduced [2Fe-2S]-[ferredoxin] + 2 S-adenosyl-L-methionine = 2-methyladenosine(37) in tRNA + 5'-deoxyadenosine + L-methionine + 2 oxidized [2Fe-2S]-[ferredoxin] + S-adenosyl-L-homocysteine. In terms of biological role, specifically methylates position 2 of adenine 2503 in 23S rRNA and position 2 of adenine 37 in tRNAs. The chain is Probable dual-specificity RNA methyltransferase RlmN from Leptospira interrogans serogroup Icterohaemorrhagiae serovar copenhageni (strain Fiocruz L1-130).